Reading from the N-terminus, the 147-residue chain is Hemoglobin subunit beta (147 aa).

A Globin domain is found at 2-147; the sequence is ELTEAQRGAI…VVSALGKQYH (146 aa). Residues H63 and H92 each contribute to the heme b site.

This sequence belongs to the globin family. Heterotetramer of two alpha chains and two beta chains. As to expression, red blood cells.

Involved in oxygen transport from gills to the various peripheral tissues. This Electrophorus electricus (Electric eel) protein is Hemoglobin subunit beta (hbb).